We begin with the raw amino-acid sequence, 283 residues long: Transmembrane protein 119 (283 aa).

Residues 1–25 (MVSAAAPSLLILLLLLLGSVPATDA) form the signal peptide. Residues 26-96 (RSVPLKATFL…IVDFFRQYVM (71 aa)) are Extracellular-facing. The O-linked (Xyl...) (chondroitin sulfate) serine glycan is linked to Ser-41. The segment covering 43–52 (EAEGSSASSP) has biased composition (low complexity). Residues 43-76 (EAEGSSASSPSLPPPWTPALSPTSMGPQPITLGG) form a disordered region. The chain crosses the membrane as a helical span at residues 97-117 (LIAVVGSLAFLLMFIVCAAVI). At 118-283 (TRQKQKASAY…CACSSVHPSV (166 aa)) the chain is on the cytoplasmic side. Disordered stretches follow at residues 136 to 168 (KYVD…ALDS) and 183 to 283 (LKSP…HPSV). Basic and acidic residues-rich tracts occupy residues 153–164 (VPDRAPDSRPEE) and 198–213 (RMVE…KGSQ). Over residues 238–264 (GVLEGAVVAGEGQGELEGSLLLAQEAQ) the composition is skewed to low complexity. At Ser-272 the chain carries Phosphoserine.

Interacts with SMAD1, SMAD5 and RUNX2. As to expression, expressed in brain microglia (at protein level). Detected in urine (at protein level). Elevated expression levels seen in the brain of patients with Alzheimer disease. Expressed by osteoblast-like cells in bone tissues and follicular dendritic cells in lymphoid tissues.

It localises to the cell membrane. It is found in the cytoplasm. The protein resides in the endoplasmic reticulum membrane. Its subcellular location is the secreted. Its function is as follows. Plays an important role in bone formation and normal bone mineralization. Promotes the differentiation of myoblasts into osteoblasts. May induce the commitment and differentiation of myoblasts into osteoblasts through an enhancement of BMP2 production and interaction with the BMP-RUNX2 pathway. Up-regulates the expression of ATF4, a transcription factor which plays a central role in osteoblast differentiation. Essential for normal spermatogenesis and late testicular differentiation. The sequence is that of Transmembrane protein 119 (TMEM119) from Homo sapiens (Human).